The chain runs to 57 residues: Ribosome modulation factor (57 aa).

Residues 1–28 (MKRQKRDRLERAQSQGYKAGLNGRSHDE) are disordered.

The protein belongs to the ribosome modulation factor family.

The protein localises to the cytoplasm. Functionally, during stationary phase, converts 70S ribosomes to an inactive dimeric form (100S ribosomes). This chain is Ribosome modulation factor, found in Vibrio cholerae serotype O1 (strain MJ-1236).